The following is a 183-amino-acid chain: SAYSvFN domain-containing protein 1 (183 aa).

Residues 1 to 105 (MEQRLAEFRA…SFLTNITFLK (105 aa)) are Cytoplasmic-facing. The segment at 11 to 36 (ARKRAGLAAQPPAASQGAQTPGEKAE) is disordered. Positions 16-36 (GLAAQPPAASQGAQTPGEKAE) are enriched in low complexity. Residues 91–105 (SCWDQSFLTNITFLK) form a middle helical (MH) region. An intramembrane region (helical) is located at residues 106-126 (VLLWLVLLGLFVELEFGLAYF). At 127-183 (VLSLFYWMYVGTRGPEEKKEGEKSAYSVFNPGCEAIQGTLTAEQLERELQLRPLAGR) the chain is on the cytoplasmic side.

Belongs to the SAYSD1 family. In terms of assembly, associates (via N-terminus) with ribosomes.

It localises to the endoplasmic reticulum membrane. Its subcellular location is the cytoplasmic vesicle membrane. In terms of biological role, ufmylation 'reader' component of a translocation-associated quality control pathway, a mechanism that takes place when a ribosome has stalled during translation, and which is required to degrade clogged substrates. Specifically recognizes and binds ufmylated ribosomes when a ribosome has stalled, promoting the transport of stalled nascent chain via the TRAPP complex to lysosomes for degradation. The sequence is that of SAYSvFN domain-containing protein 1 from Homo sapiens (Human).